We begin with the raw amino-acid sequence, 55 residues long: Neurotoxin B-II (55 aa).

Proline 10 bears the Hydroxyproline mark. 4 cysteine pairs are disulfide-bonded: cysteine 12–cysteine 48, cysteine 16–cysteine 52, cysteine 23–cysteine 41, and cysteine 26–cysteine 37.

Belongs to the worm B-toxin family.

The protein localises to the secreted. This toxin increases the excitability of nerves by delaying the inactivation of the voltage-gated sodium channel (Nav). Only acts on some crustacean. Neurotoxin B-II is less abundant, but 15-fold more toxic than neurotoxin B-VI. The sequence is that of Neurotoxin B-II from Cerebratulus lacteus (Milky ribbon worm).